Here is a 127-residue protein sequence, read N- to C-terminus: Unclassified hydrophobin 5 (127 aa).

Positions 1-24 are cleaved as a signal peptide; sequence MFNKQTNAIVLLFTFALFATLAVA. Cystine bridges form between Cys-39-Cys-107, Cys-46-Cys-101, Cys-47-Cys-92, and Cys-108-Cys-121.

This sequence belongs to the fungal hydrophobin family. Self-assembles to form functional amyloid fibrils called rodlets. Self-assembly into fibrillar rodlets occurs spontaneously at hydrophobic:hydrophilic interfaces and the rodlets further associate laterally to form amphipathic monolayers.

It localises to the secreted. It is found in the cell wall. Aerial growth, conidiation, and dispersal of filamentous fungi in the environment rely upon a capability of their secreting small amphipathic proteins called hydrophobins (HPBs) with low sequence identity. Class I can self-assemble into an outermost layer of rodlet bundles on aerial cell surfaces, conferring cellular hydrophobicity that supports fungal growth, development and dispersal; whereas Class II form highly ordered films at water-air interfaces through intermolecular interactions but contribute nothing to the rodlet structure. This chain is Unclassified hydrophobin 5, found in Pleurotus ostreatus (strain PC15) (Oyster mushroom).